The primary structure comprises 799 residues: Dipeptidyl peptidase family member 1 (799 aa).

Topologically, residues 1–31 are cytoplasmic; it reads MTAEADLLEGYDEELGGNESQKRDCKGITTA. The chain crosses the membrane as a helical; Signal-anchor for type II membrane protein span at residues 32 to 52; it reads IVVVLLILVMIFAALVFFTPL. At 53–799 the chain is on the lumenal side; that stretch reads FAAKSFGSWR…FLRQCFYTDK (747 aa). Asn64, Asn138, Asn267, and Asn335 each carry an N-linked (GlcNAc...) asparagine glycan. Cys474 and Cys477 are disulfide-bonded. A glycan (N-linked (GlcNAc...) asparagine) is linked at Asn481. Cys482 and Cys500 are oxidised to a cystine. Residue Asn512 is glycosylated (N-linked (GlcNAc...) asparagine). Catalysis depends on charge relay system residues Ser669, Asp742, and His774. Cys689 and Cys794 are oxidised to a cystine.

This sequence belongs to the peptidase S9B family. DPPIV subfamily.

Its subcellular location is the cell membrane. In terms of biological role, removes N-terminal dipeptides sequentially from polypeptides. Essential for control of distal tip cell migration. The protein is Dipeptidyl peptidase family member 1 (dpf-1) of Caenorhabditis elegans.